Reading from the N-terminus, the 145-residue chain is MNMDFNLFMNDVVRQARQEITAAGYTELKTPEEVDEALTKKGTTLVMVNSVCGCAGGIARPAAHHAVHYDKRPDHLVTVFAGQDKEATARAREYFEGYPPSSPSFALLKDGKILKMVERHEIEGYEPMAVITKLQGLFEEYCEEV.

Belongs to the bacilliredoxin family.

The chain is Bacilliredoxin BLi02578/BL01507 from Bacillus licheniformis (strain ATCC 14580 / DSM 13 / JCM 2505 / CCUG 7422 / NBRC 12200 / NCIMB 9375 / NCTC 10341 / NRRL NRS-1264 / Gibson 46).